A 313-amino-acid chain; its full sequence is Ribosomal RNA small subunit methyltransferase H (313 aa).

S-adenosyl-L-methionine-binding positions include 35–37, aspartate 55, phenylalanine 80, aspartate 102, and glutamine 109; that span reads GGH.

It belongs to the methyltransferase superfamily. RsmH family.

Its subcellular location is the cytoplasm. It catalyses the reaction cytidine(1402) in 16S rRNA + S-adenosyl-L-methionine = N(4)-methylcytidine(1402) in 16S rRNA + S-adenosyl-L-homocysteine + H(+). Functionally, specifically methylates the N4 position of cytidine in position 1402 (C1402) of 16S rRNA. In Shewanella sp. (strain MR-7), this protein is Ribosomal RNA small subunit methyltransferase H.